A 148-amino-acid polypeptide reads, in one-letter code: Leghemoglobin 2 (148 aa).

One can recognise a Globin domain in the interval 2–148; that stretch reads GFTEKQEALV…LSAAIKKAMS (147 aa). A Nitrated tyrosine modification is found at Tyr30. Heme b is bound at residue Ser45. Phosphoserine is present on Ser45. Position 63 (His63) interacts with O2. 3 residues coordinate heme b: Lys66, His95, and Lys98. Residue Tyr136 is modified to Nitrated tyrosine.

The protein belongs to the plant globin family. Monomer. Post-translationally, nitrated in effective nodules and particularly in hypoxic conditions; this mechanism may play a protective role in the symbiosis by buffering toxic peroxynitrite NO(2)(-). Nitration level decrease during nodule senescence. Phosphorylation at Ser-45 disrupts the molecular environment of its porphyrin ring oxygen binding pocket, thus leading to a reduced oxygen consumption and to the delivery of oxygen O(2) to symbiosomes. Stem nodules.

It is found in the cytoplasm. Its subcellular location is the cytosol. The protein localises to the nucleus. Functionally, leghemoglobin that reversibly binds oxygen O(2) through a pentacoordinated heme iron. In stem nodules, facilitates the diffusion of oxygen to the bacteroids while preventing the bacterial nitrogenase from being inactivated by buffering dioxygen, nitric oxide and carbon monoxide, and promoting the formation of reactive oxygen species (ROS, e.g. H(2)O(2)). This role is essential for symbiotic nitrogen fixation (SNF). In Sesbania rostrata, this protein is Leghemoglobin 2.